We begin with the raw amino-acid sequence, 91 residues long: UPF0335 protein BRADO1188 (91 aa).

It belongs to the UPF0335 family.

The chain is UPF0335 protein BRADO1188 from Bradyrhizobium sp. (strain ORS 278).